A 398-amino-acid chain; its full sequence is ATP-dependent RNA helicase eIF4A (398 aa).

The short motif at 25-53 (DSFDTMNLKPELLRGVYAYGFERPSAIQQ) is the Q motif element. Residues 56–226 (IMPVIKGHDV…TKFMRDPVRI (171 aa)) enclose the Helicase ATP-binding domain. 69 to 76 (AQSGTGKT) lines the ATP pocket. The DEAD box signature appears at 174-177 (DEAD). Positions 237-398 (GIKQFYIAVE…EMPMNVADLI (162 aa)) constitute a Helicase C-terminal domain.

It belongs to the DEAD box helicase family. eIF4A subfamily. Component of the eIF4F complex, which composition varies with external and internal environmental conditions. It is composed of at least eIF4A, eIF4E and eIF4G.

The protein localises to the cytoplasm. The enzyme catalyses ATP + H2O = ADP + phosphate + H(+). Functionally, ATP-dependent RNA helicase which is a subunit of the eIF4F complex involved in cap recognition and is required for mRNA binding to ribosome. In the current model of translation initiation, eIF4A unwinds RNA secondary structures in the 5'-UTR of mRNAs which is necessary to allow efficient binding of the small ribosomal subunit, and subsequent scanning for the initiator codon. In Sclerotinia sclerotiorum (strain ATCC 18683 / 1980 / Ss-1) (White mold), this protein is ATP-dependent RNA helicase eIF4A (tif1).